We begin with the raw amino-acid sequence, 171 residues long: Endoribonuclease YbeY (171 aa).

Residues His130, His134, and His140 each contribute to the Zn(2+) site.

Belongs to the endoribonuclease YbeY family. Zn(2+) serves as cofactor.

The protein localises to the cytoplasm. In terms of biological role, single strand-specific metallo-endoribonuclease involved in late-stage 70S ribosome quality control and in maturation of the 3' terminus of the 16S rRNA. This Neisseria gonorrhoeae (strain ATCC 700825 / FA 1090) protein is Endoribonuclease YbeY.